A 698-amino-acid chain; its full sequence is Glycine--tRNA ligase beta subunit (698 aa).

This sequence belongs to the class-II aminoacyl-tRNA synthetase family. As to quaternary structure, tetramer of two alpha and two beta subunits.

The protein resides in the cytoplasm. It carries out the reaction tRNA(Gly) + glycine + ATP = glycyl-tRNA(Gly) + AMP + diphosphate. This is Glycine--tRNA ligase beta subunit from Xanthomonas campestris pv. campestris (strain 8004).